The primary structure comprises 294 residues: Bifunctional protein FolD (294 aa).

Residues 169–171, Thr-196, and Val-237 each bind NADP(+); that span reads GRG.

Belongs to the tetrahydrofolate dehydrogenase/cyclohydrolase family. Homodimer.

It carries out the reaction (6R)-5,10-methylene-5,6,7,8-tetrahydrofolate + NADP(+) = (6R)-5,10-methenyltetrahydrofolate + NADPH. It catalyses the reaction (6R)-5,10-methenyltetrahydrofolate + H2O = (6R)-10-formyltetrahydrofolate + H(+). It participates in one-carbon metabolism; tetrahydrofolate interconversion. Catalyzes the oxidation of 5,10-methylenetetrahydrofolate to 5,10-methenyltetrahydrofolate and then the hydrolysis of 5,10-methenyltetrahydrofolate to 10-formyltetrahydrofolate. The chain is Bifunctional protein FolD from Renibacterium salmoninarum (strain ATCC 33209 / DSM 20767 / JCM 11484 / NBRC 15589 / NCIMB 2235).